Consider the following 343-residue polypeptide: Transmembrane protein 120A (343 aa).

Residues 1–132 (MHPPPPGPLG…KQAKFAYKDE (132 aa)) are Cytoplasmic-facing. K130 lines the CoA pocket. Residues 133–152 (YEKFKLYLTIILILISFTCR) form a helical membrane-spanning segment. The Extracellular portion of the chain corresponds to 153–158 (FLLNSR). The chain crosses the membrane as a helical span at residues 159–177 (VTDAAFNFLLVWYYCTLTI). Residues 178–190 (RESILINNGSRIK) are Cytoplasmic-facing. CoA contacts are provided by S187 and R188. Residues 191–209 (GWWVFHHYVSTFLSGVMLT) traverse the membrane as a helical segment. The Extracellular portion of the chain corresponds to 210–218 (WPDGLMYQK). The chain crosses the membrane as a helical span at residues 219–240 (FRNQFLSFSMYQSFVQFLQYYY). Residues Q237, Y240, Q241, and H283 each contribute to the CoA site. Residues 241 to 270 (QSGCLYRLRALGERHTMDLTVEGFQSWMWR) lie on the Cytoplasmic side of the membrane. Residues 271–294 (GLTFLLPFLFFGHFWQLFNALTLF) traverse the membrane as a helical segment. At 295–304 (NLARDPECKE) the chain is on the extracellular side. Residues 305 to 330 (WQVLMCGFPFLLLFLGNFFTTLRVVH) traverse the membrane as a helical segment. The Cytoplasmic portion of the chain corresponds to 331–343 (QKFHNQLHGSKKE). K332 contributes to the CoA binding site.

The protein belongs to the TMEM120 family. As to quaternary structure, homodimer. Forms heterooligomer with TMEM120B. Interacts with PKD2; TMEM120A inhibits PKD2 channel activity through the physical association of PKD2 with TMEM120A.

The protein localises to the cell membrane. Its subcellular location is the nucleus inner membrane. It localises to the endoplasmic reticulum. Its function is as follows. Multifunctional protein involved in mechanosensation, and plays an essential role in lipid metabolism and adipocyte differentiation. May function as an ion channel involved in sensing mechanical stimuli. Mediates the mechanosensitivity of the PKD2-TMEM120A channel complex through direct physical interaction. TMEM120A seems to affect mechanosensation by inhibiting PIEZO2 channels, possibly by altering cellular lipid content. TMEM120A is structurally similar to a lipid-modifying enzyme, ELOVL7, and contains a bound coenzyme A molecule, which suggests it might function as an enzyme in lipid metabolism. Additionnaly, implicated in innate immune response against Zika virus. Acts as a key activator of the antiviral signaling involving STING1. The sequence is that of Transmembrane protein 120A from Bos taurus (Bovine).